A 357-amino-acid chain; its full sequence is Alanine racemase, catabolic (357 aa).

Lys33 (proton acceptor; specific for D-alanine) is an active-site residue. At Lys33 the chain carries N6-(pyridoxal phosphate)lysine. Lys122 carries the post-translational modification N6-carboxylysine. Arg129 is a binding site for substrate. Residue Tyr253 is the Proton acceptor; specific for L-alanine of the active site. Substrate is bound at residue Met301.

It belongs to the alanine racemase family. Homodimer. The cofactor is pyridoxal 5'-phosphate.

The enzyme catalyses L-alanine = D-alanine. Isomerizes L-alanine to D-alanine which is then oxidized to pyruvate by DadA. This is Alanine racemase, catabolic from Pseudomonas aeruginosa (strain ATCC 15692 / DSM 22644 / CIP 104116 / JCM 14847 / LMG 12228 / 1C / PRS 101 / PAO1).